The chain runs to 671 residues: cGMP-dependent protein kinase 1 (671 aa).

S2 carries the post-translational modification N-acetylserine. Residues 2–59 (SELEEDFAKILMLKEERIKELEKRLSEKEEEIQELKRKLHKCQSVLPVPSTHIGPRTT) are a coiled coil. Residues 2 to 102 (SELEEDFAKI…LIKEAILDND (101 aa)) form a required for dimerization region. Positions 9–44 (AKILMLKEERIKELEKRLSEKEEEIQELKRKLHKCQ) are leucine-zipper. Residues 50-75 (PSTHIGPRTTRAQGISAEPQTYRSFH) are autoinhibitory domain. T59 bears the Phosphothreonine; by autocatalysis mark. The segment at 103-220 (FMKNLELSQI…EYMEFLKSVP (118 aa)) is cGMP-binding, high affinity. 3',5'-cyclic GMP is bound by residues 167–170 (GELA), 177–178 (RT), R282, 291–294 (GEKA), 301–302 (RT), and Y336. Positions 221 to 341 (TFQSLPEEIL…SNKAYEDAEA (121 aa)) are cGMP-binding, low affinity. Residues 360–619 (FNIIDTLGVG…VKDIQKHKWF (260 aa)) enclose the Protein kinase domain. ATP is bound by residues 366–374 (LGVGGFGRV) and K390. D484 functions as the Proton acceptor in the catalytic mechanism. Position 515 is a phosphothreonine (T515). The region spanning 620–671 (EGFNWEGLRKGTLTPPIIPSVASPTDTSNFDGFPEDNDEPPPDDNSGWDIDF) is the AGC-kinase C-terminal domain. A disordered region spans residues 635 to 671 (PIIPSVASPTDTSNFDGFPEDNDEPPPDDNSGWDIDF). Residues 652–661 (FPEDNDEPPP) are compositionally biased toward acidic residues.

The protein belongs to the protein kinase superfamily. AGC Ser/Thr protein kinase family. cGMP subfamily. In terms of assembly, isoform alpha: parallel homodimer or heterodimer and also heterotetramer. Interacts directly with PPP1R12A. Non-covalent dimer of dimer of PRKG1-PRKG1 and PPP1R12A-PPP1R12A. This interaction targets PRKG1 to stress fibers to mediate smooth muscle cell relaxation and vasodilation in responses to rises in cGMP. Isoform beta: antiparallel homodimer. Part of cGMP kinase signaling complex at least composed of ACTA2/alpha-actin, CNN1/calponin H1, PLN/phospholamban, PRKG1 and ITPR1. Interacts with IRAG1. Forms a stable complex with ITPR1, IRAG1, and isoform beta of PRKG1. Interacts with TRPC7 (via ankyrin repeat domain). Isoform alpha interacts with RGS2. Interacts with GTF2I. Post-translationally, autophosphorylation increases kinase activity. In terms of processing, 65 kDa monomer is produced by proteolytic cleavage.

It localises to the cytoplasm. The enzyme catalyses L-seryl-[protein] + ATP = O-phospho-L-seryl-[protein] + ADP + H(+). The catalysed reaction is L-threonyl-[protein] + ATP = O-phospho-L-threonyl-[protein] + ADP + H(+). With respect to regulation, in the absence of cGMP, PRKG1 activity is suppressed by autoinhibitory contacts. Serine/threonine protein kinase that acts as a key mediator of the nitric oxide (NO)/cGMP signaling pathway. GMP binding activates PRKG1, which phosphorylates serines and threonines on many cellular proteins. Numerous protein targets for PRKG1 phosphorylation are implicated in modulating cellular calcium, but the contribution of each of these targets may vary substantially among cell types. Proteins that are phosphorylated by PRKG1 regulate platelet activation and adhesion, smooth muscle contraction, cardiac function, gene expression, feedback of the NO-signaling pathway, and other processes involved in several aspects of the CNS like axon guidance, hippocampal and cerebellar learning, circadian rhythm and nociception. Smooth muscle relaxation is mediated through lowering of intracellular free calcium, by desensitization of contractile proteins to calcium, and by decrease in the contractile state of smooth muscle or in platelet activation. Regulates intracellular calcium levels via several pathways: phosphorylates IRAG1 and inhibits IP3-induced Ca(2+) release from intracellular stores, phosphorylation of KCNMA1 (BKCa) channels decreases intracellular Ca(2+) levels, which leads to increased opening of this channel. PRKG1 phosphorylates the canonical transient receptor potential channel (TRPC) family which inactivates the associated inward calcium current. Another mode of action of NO/cGMP/PKGI signaling involves PKGI-mediated inactivation of the Ras homolog gene family member A (RhoA). Phosphorylation of RHOA by PRKG1 blocks the action of this protein in myriad processes: regulation of RHOA translocation; decreasing contraction; controlling vesicle trafficking, reduction of myosin light chain phosphorylation resulting in vasorelaxation. Activation of PRKG1 by NO signaling also alters gene expression in a number of tissues. In smooth muscle cells, increased cGMP and PRKG1 activity influence expression of smooth muscle-specific contractile proteins, levels of proteins in the NO/cGMP signaling pathway, down-regulation of the matrix proteins osteopontin and thrombospondin-1 to limit smooth muscle cell migration and phenotype. Regulates vasodilator-stimulated phosphoprotein (VASP) functions in platelets and smooth muscle. The polypeptide is cGMP-dependent protein kinase 1 (PRKG1) (Oryctolagus cuniculus (Rabbit)).